An 88-amino-acid chain; its full sequence is Monensin polyketide synthase acyl carrier protein (88 aa).

The Carrier domain maps to 5 to 82 (PFTLADLQRI…ELIDHVNERL (78 aa)). At Ser-42 the chain carries O-(pantetheine 4'-phosphoryl)serine.

Post-translationally, 4'-phosphopantetheine is transferred from CoA to a specific serine of the apo-ACP-like protein.

It participates in antifungal biosynthesis; monensin biosynthesis. Functionally, acyl carrier protein. The chain is Monensin polyketide synthase acyl carrier protein from Streptomyces virginiae (Streptomyces cinnamonensis).